The primary structure comprises 87 residues: DNA/RNA-binding protein Alba (87 aa).

Residue K9 is modified to N6-acetyllysine.

This sequence belongs to the histone-like Alba family. Post-translationally, acetylated. Acetylation at Lys-9 decreases DNA-binding affinity.

It is found in the cytoplasm. The protein resides in the chromosome. In terms of biological role, binds double-stranded DNA tightly but without sequence specificity. Involved in DNA compaction. The sequence is that of DNA/RNA-binding protein Alba from Methanocaldococcus jannaschii (strain ATCC 43067 / DSM 2661 / JAL-1 / JCM 10045 / NBRC 100440) (Methanococcus jannaschii).